A 195-amino-acid polypeptide reads, in one-letter code: Cytochrome b-245 light chain (195 aa).

Residues 2–7 (GQIEWA) lie on the Cytoplasmic side of the membrane. The helical transmembrane segment at 8-30 (MWANEQALASGLILITGGIVATA) threads the bilayer. Residues 31–35 (GRFTQ) are Extracellular-facing. The chain crosses the membrane as a helical span at residues 36 to 53 (WYFGAYSIVAGVFVCLLE). The Cytoplasmic portion of the chain corresponds to 54–69 (YPRGKRKKGSTMERWG). The stretch at 70–80 (QKYMTAVVKLF) is an intramembrane region. Topologically, residues 81–86 (GPFTRN) are cytoplasmic. Residues 87-104 (YYVRAVLHLLLSVPAGFL) traverse the membrane as a helical segment. Residue Leu-105 is a topological domain, extracellular. A helical transmembrane segment spans residues 106 to 126 (ATILGTACLAIASGIYLLAAV). Over 127–195 (RGEQWTPIEP…NPIPVTDEVV (69 aa)) the chain is Cytoplasmic. The segment at 134–195 (IEPKPRERPQ…NPIPVTDEVV (62 aa)) is disordered. At Thr-147 the chain carries Phosphothreonine. A Glycyl lysine isopeptide (Lys-Gly) (interchain with G-Cter in ubiquitin) cross-link involves residue Lys-149. Position 168 is a phosphoserine (Ser-168).

It belongs to the p22phox family. Component of the phagocyte NADPH oxidase core complex/cytochrome b558 complex, composed of CYBB (heavy chain (beta)) and CYBA (light chain (alpha)). Component of the phagocyte NADPH oxidase complex composed of an obligatory core heterodimer formed by the membrane proteins CYBA and CYBB and the cytosolic regulatory subunits NCF1/p47-phox, NCF2/p67-phox, NCF4/p40-phox and the small GTPase RAC1 or RAC2. Interacts with NCF1 (via SH3 domain). Interacts with SH3PXD2A. Interacts with DUOX1, DUOX2 and TPO. Interacts with NOX4; this interaction mediates superoxide generation. Interacts with calprotectin (S100A8/9). Interacts with GBP7. Interacts with NOXO1. Forms a heterodimer with NOX3 and is essential for activity and cell membrane localization of NOX3. Interacts with NOX1. Post-translationally, phosphorylation at Thr-147 enhances NADPH oxidase activity by promoting NCF1/p47-phox binding. In terms of processing, ubiquitinated at Lys-149 likely by RNF145.

It localises to the cell membrane. In terms of biological role, subunit of NADPH oxidase complexes that is required for the NADPH oxidase activity that generates, in various cell types, superoxide from molecular oxygen utilizing NADPH as an electron donor. Subunit of the phagocyte NADPH oxidase complex that mediates the transfer of electrons from cytosolic NADPH to O2 to produce the superoxide anion (O2(-)). In the activated complex, electrons are first transferred from NADPH to flavin adenine dinucleotide (FAD) and subsequently transferred via two heme molecules to molecular oxygen, producing superoxide through an outer-sphere reaction. Activation of the NADPH oxidase complex is initiated by the assembly of cytosolic subunits of the NADPH oxidase complex with the core NADPH oxidase complex to form a complex at the plasma membrane or phagosomal membrane. This activation process is initiated by phosphorylation dependent binding of the cytosolic NCF1/p47-phox subunit to the C-terminus of CYBA/p22-phox. Aassociates with NOX3 to form a functional NADPH oxidase constitutively generating superoxide. In Homo sapiens (Human), this protein is Cytochrome b-245 light chain.